The sequence spans 107 residues: U1-lycotoxin-Ls1w (107 aa).

A signal peptide spans 1 to 20 (MLKVLVVVALLVTLISYSSS). Positions 21–41 (EGIDDLEADELLSLMANEQTR) are excised as a propeptide. Cystine bridges form between cysteine 44/cysteine 59, cysteine 51/cysteine 68, cysteine 58/cysteine 86, and cysteine 70/cysteine 84.

The protein belongs to the neurotoxin 19 (CSTX) family. 04 (U1-Lctx) subfamily. Expressed by the venom gland.

The protein localises to the secreted. This Lycosa singoriensis (Wolf spider) protein is U1-lycotoxin-Ls1w.